The primary structure comprises 204 residues: Glycerol-3-phosphate acyltransferase (204 aa).

Transmembrane regions (helical) follow at residues 8-28, 53-73, 81-101, 116-136, and 155-175; these read ILIFAYLLGSINSAIIVCYIF, VPAAITLIFDILKGLVPVVIA, FITACTALYAILGHIFPIFFG, FGFSWILGLIFVITWLCVAII, and VIFTSDLQVAAPFLIIAIIIL.

This sequence belongs to the PlsY family. As to quaternary structure, probably interacts with PlsX.

It localises to the cell inner membrane. The catalysed reaction is an acyl phosphate + sn-glycerol 3-phosphate = a 1-acyl-sn-glycero-3-phosphate + phosphate. It functions in the pathway lipid metabolism; phospholipid metabolism. In terms of biological role, catalyzes the transfer of an acyl group from acyl-phosphate (acyl-PO(4)) to glycerol-3-phosphate (G3P) to form lysophosphatidic acid (LPA). This enzyme utilizes acyl-phosphate as fatty acyl donor, but not acyl-CoA or acyl-ACP. In Francisella tularensis subsp. mediasiatica (strain FSC147), this protein is Glycerol-3-phosphate acyltransferase.